A 198-amino-acid chain; its full sequence is Armadillo repeat-containing protein 7 (198 aa).

2 ARM repeats span residues 57 to 99 and 100 to 140; these read QVLD…QAGG and LPLI…TSLP. The residue at position 169 (Ser-169) is a Phosphoserine.

In terms of assembly, component of the minor spliceosome. Within this complex, interacts with RBM48.

Its function is as follows. As a component of the minor spliceosome, involved in the splicing of U12-type introns in pre-mRNAs. In Mus musculus (Mouse), this protein is Armadillo repeat-containing protein 7 (Armc7).